Reading from the N-terminus, the 336-residue chain is Dual specificity mitogen-activated protein kinase kinase sek-1 (336 aa).

Positions 50 to 311 (LVVLEELGKG…YPELLAMPFM (262 aa)) constitute a Protein kinase domain. ATP contacts are provided by residues 56 to 64 (LGKGGYGIV) and Lys79. Asp176 (proton acceptor) is an active-site residue. Ser204 is modified (phosphoserine). A Phosphothreonine modification is found at Thr208.

This sequence belongs to the protein kinase superfamily. STE Ser/Thr protein kinase family. MAP kinase kinase subfamily. In terms of assembly, interacts with nsy-1. Interacts with unc-16. Mg(2+) serves as cofactor. Expressed in linker cell in males.

The catalysed reaction is L-seryl-[protein] + ATP = O-phospho-L-seryl-[protein] + ADP + H(+). It carries out the reaction L-threonyl-[protein] + ATP = O-phospho-L-threonyl-[protein] + ADP + H(+). The enzyme catalyses L-tyrosyl-[protein] + ATP = O-phospho-L-tyrosyl-[protein] + ADP + H(+). Its activity is regulated as follows. Activated by nsy-1-mediated phosphorylation. Dual specificity protein kinase which acts as an essential component of the p38 signal transduction pathway which is also composed of upstream effector nsy-1 and downstream effector pmk-1. May phosphorylate pmk-1. Downstream of CaMKII unc-43 and adapter protein tir-1, plays a role in determining asymmetric cell fates in olfactory AWC neurons during neuronal development. Activation results in the repression of odorant receptor str-2 expression in one of the 2 AWC neurons. Involved in resistance to pathogenic Gram-positive and Gram-negative bacterial and fungal infection. Involved in resistance to the nematotoxic C.cinerea galectin Cgl2. Probably by promoting pmk-1-mediated activation of skn-1, involved in the up-regulation of gcs-1 and glutathione-S-transferase gst-4 expression upon bacterial infection. Probably downstream of tir-1, required for the expression of antimicrobial peptide nlp-29 in the epidermis in response to fungal infection or physical injury. Regulates susceptibility of B.thuringiensis pore-forming toxin Cry5B and Cry21A. Involved in the response to oxidative stress. May regulate transcription factor daf-16 localization during oxidative stress. By phosphorylating pmk-1, regulates skn-1 localization during oxidative stress. By phosphorylating and activating pmk-1, plays a role in the stabilization of transcription factor rnt-1 in the intestine during oxidative stress. Up-regulates expression of gcs-1 in intestine upon arsenite treatment. Regulates germline proliferation in response to osmotic stress, starvation and germline apoptosis induced by heavy metals, such as Cu(2+). In association with mek-1, regulates germline cell apoptosis in response to oxidative, osmotic and heat shock stresses. Plays a role downstream of tir-1/nsy-1 in regulating susceptibility to anoxia. In males, by regulating pqn-41 expression, involved in non-apoptotic death of the linker cell which guides gonad elongation during larval development. Involved in egg laying. This Caenorhabditis elegans protein is Dual specificity mitogen-activated protein kinase kinase sek-1.